Reading from the N-terminus, the 477-residue chain is E3 ubiquitin-protein ligase TRIM17 (477 aa).

Residues 16 to 66 form an RING-type zinc finger; sequence CSICLDYFTDPVMTACGHNFCRECIQMSWEKGKVKKGKKKQKGSFPCPECR. The B box-type zinc-finger motif lies at 94–135; that stretch reads QKRDLCQAHQEPLKLFCQDDQSPICVVCREAQEHRMHRVLPL. Zn(2+) is bound by residues cysteine 99, histidine 102, cysteine 121, and histidine 127. The stretch at 135–226 forms a coiled coil; sequence LDEAAREYKL…KLQDSKASLD (92 aa). Positions 276-475 constitute a B30.2/SPRY domain; sequence AIKTLCRVPG…MVISTVTMWV (200 aa).

This sequence belongs to the TRIM/RBCC family. Interacts (via coiled coil) with TRIM44 (via coiled coil). Interacts with TRIM28; this interaction prevents TRIM28 activity on BCL2A1. Interacts with TRIM41; this interaction prevents TRIM41 activity on ZSCAN2. Interacts with BECN1. Interacts with NFATC3 and NFATC4; these interactions prevent NFATC3 and NFATC4 nuclear localization. In terms of processing, auto-ubiquitinated. Almost exclusively in the testis.

Its subcellular location is the cytoplasm. It is found in the lysosome. It catalyses the reaction S-ubiquitinyl-[E2 ubiquitin-conjugating enzyme]-L-cysteine + [acceptor protein]-L-lysine = [E2 ubiquitin-conjugating enzyme]-L-cysteine + N(6)-ubiquitinyl-[acceptor protein]-L-lysine.. It functions in the pathway protein modification; protein ubiquitination. Functionally, E3 ubiquitin ligase that plays important roles in the regulation of neuronal apoptosis, selective autophagy or cell proliferation. Stimulates the degradation of kinetochore ZW10 interacting protein ZWINT in a proteasome-dependent manner, leading to negative regulation of cell proliferation. Inhibits autophagic degradation of diverse known targets while contributing to autophagy of midbodies. Autophagy-inhibitory activity involves MCL1, which TRIM17 assembles into complexes with the key autophagy regulator BECN1. Controls neuronal apoptosis by mediating ubiquitination and degradation of MCL1 to initiate neuronal death. In addition, regulates NFAT transcription factors NFATC3 and NFATC4 activities by preventing their nuclear localization, thus inhibiting their transcriptional activities. Decreases TRIM41-mediated degradation of ZSCAN2 thereby stimulating alpha-synuclein/SNCA transcription in neuronal cells. Prevents the E3 ubiquitin-ligase activity of TRIM28 and its interaction with anti-apoptotic BCL2A1, blocking TRIM28 from ubiquitinating BCL2A1. In Mus musculus (Mouse), this protein is E3 ubiquitin-protein ligase TRIM17 (Trim17).